We begin with the raw amino-acid sequence, 158 residues long: Transcription elongation factor GreA (158 aa).

Residues 14–76 (LDQLKDELTH…EIESILKNVK (63 aa)) adopt a coiled-coil conformation.

Belongs to the GreA/GreB family.

Functionally, necessary for efficient RNA polymerase transcription elongation past template-encoded arresting sites. The arresting sites in DNA have the property of trapping a certain fraction of elongating RNA polymerases that pass through, resulting in locked ternary complexes. Cleavage of the nascent transcript by cleavage factors such as GreA or GreB allows the resumption of elongation from the new 3'terminus. GreA releases sequences of 2 to 3 nucleotides. In Acholeplasma laidlawii (strain PG-8A), this protein is Transcription elongation factor GreA.